A 473-amino-acid chain; its full sequence is Glutamate--tRNA ligase (473 aa).

Residues 9–19 (PSPTGELHLGS) carry the 'HIGH' region motif. Residues 237–241 (KLSKK) carry the 'KMSKS' region motif. Lys-240 is a binding site for ATP.

The protein belongs to the class-I aminoacyl-tRNA synthetase family. Glutamate--tRNA ligase type 1 subfamily. Monomer.

It localises to the cytoplasm. It catalyses the reaction tRNA(Glu) + L-glutamate + ATP = L-glutamyl-tRNA(Glu) + AMP + diphosphate. In terms of biological role, catalyzes the attachment of glutamate to tRNA(Glu) in a two-step reaction: glutamate is first activated by ATP to form Glu-AMP and then transferred to the acceptor end of tRNA(Glu). The chain is Glutamate--tRNA ligase from Wigglesworthia glossinidia brevipalpis.